We begin with the raw amino-acid sequence, 446 residues long: Solute carrier family 52, riboflavin transporter, member 2 (446 aa).

A run of 4 helical transmembrane segments spans residues 14 to 34 (LLVALFGMGSWAAINGIWVEL), 47 to 67 (LPSYLSVLVALGNLGLLVVTL), 79 to 99 (APIQVVQALSVVGTALLAPLW), and 104 to 124 (VMAGQVHSVAFLALTFVLALA). Asn129 carries an N-linked (GlcNAc...) asparagine glycan. Transmembrane regions (helical) follow at residues 147-167 (FFLGQGLSALLPCVLALGQGV) and 196-216 (FFGALTALLVISAAAFQGLLL). Residues 228–267 (GSGTGLRGGAPGVEEEEEEEASPLQEPPSQAAGNTPSPDP) are disordered. Residues 229–238 (SGTGLRGGAP) show a composition bias toward gly residues. Residues 254–263 (PPSQAAGNTP) are compositionally biased toward polar residues. Transmembrane regions (helical) follow at residues 278–298 (ACLLGLLATTSALTNGVLPAV), 313–333 (LAVVLGSASNPLACFLAMGIL), 340–360 (LGGLSLLGTLFGAYLMALAIL), 367–387 (VGTSAGMVLVVVLWALCLGVF), and 405–425 (ALLAAGVAIQVGSLLGAVTMF).

Belongs to the riboflavin transporter family.

It is found in the cell membrane. The enzyme catalyses riboflavin(in) = riboflavin(out). Riboflavin transport is Na(+)-independent but moderately pH-sensitive. Activity is strongly inhibited by riboflavin analogs, such as lumiflavin. Weakly inhibited by flavin adenine dinucleotide (FAD) and flavin mononucleotide (FMN). Functionally, plasma membrane transporter mediating the uptake by cells of the water soluble vitamin B2/riboflavin that plays a key role in biochemical oxidation-reduction reactions of the carbohydrate, lipid, and amino acid metabolism. May also act as a receptor for 4-hydroxybutyrate. (Microbial infection) In case of infection by porcine endogenous retrovirus (PERV-A), acts as a cell receptor to retroviral envelopes. The sequence is that of Solute carrier family 52, riboflavin transporter, member 2 (SLC52A2) from Sus scrofa (Pig).